The primary structure comprises 284 residues: Isopentenyl-diphosphate Delta-isomerase II, chloroplastic (284 aa).

Residues 1–45 (MSASSLFNLPLIRLRSLALSSSFSSFRFAHRPLSSISPRKLPNFR) constitute a chloroplast transit peptide. At Ala46 the chain carries N-acetylalanine. Lys88 provides a ligand contact to substrate. Residues His92 and His104 each coordinate Mg(2+). In terms of domain architecture, Nudix hydrolase spans 102-254 (LLHRAFSVFL…GLKLSPWFRL (153 aa)). Substrate contacts are provided by Arg123 and Lys127. Residue Cys139 is part of the active site. Ser140 contributes to the substrate binding site. The Nudix box signature appears at 140 to 170 (SHPLYRESELIQDNALGVRNAAQRKLLDELG). Mg(2+) is bound by residues Glu199 and Glu201. Glu201 is an active-site residue.

Belongs to the IPP isomerase type 1 family. Mg(2+) serves as cofactor.

Its subcellular location is the plastid. The protein localises to the chloroplast. The catalysed reaction is isopentenyl diphosphate = dimethylallyl diphosphate. The protein operates within isoprenoid biosynthesis; dimethylallyl diphosphate biosynthesis; dimethylallyl diphosphate from isopentenyl diphosphate: step 1/1. It participates in porphyrin-containing compound metabolism; chlorophyll biosynthesis. In terms of biological role, catalyzes the 1,3-allylic rearrangement of the homoallylic substrate isopentenyl (IPP) to its highly electrophilic allylic isomer, dimethylallyl diphosphate (DMAPP). This Arabidopsis thaliana (Mouse-ear cress) protein is Isopentenyl-diphosphate Delta-isomerase II, chloroplastic (IPP2).